Here is a 158-residue protein sequence, read N- to C-terminus: Transcription elongation factor GreA (158 aa).

Residues 47 to 74 (NSEYDEAKNEQAFTEGRIIQLENMLKNA) are a coiled coil.

It belongs to the GreA/GreB family.

Functionally, necessary for efficient RNA polymerase transcription elongation past template-encoded arresting sites. The arresting sites in DNA have the property of trapping a certain fraction of elongating RNA polymerases that pass through, resulting in locked ternary complexes. Cleavage of the nascent transcript by cleavage factors such as GreA or GreB allows the resumption of elongation from the new 3'terminus. GreA releases sequences of 2 to 3 nucleotides. The polypeptide is Transcription elongation factor GreA (Clostridium perfringens (strain ATCC 13124 / DSM 756 / JCM 1290 / NCIMB 6125 / NCTC 8237 / Type A)).